The primary structure comprises 1232 residues: Anoctamin-8 (1232 aa).

Residues Met-1–Ser-32 form a disordered region. Ala-2 carries the N-acetylalanine modification. Over Ala-2–Lys-244 the chain is Extracellular. Residues Glu-14–Pro-23 are compositionally biased toward basic and acidic residues. Residues Ile-245 to Phe-265 traverse the membrane as a helical segment. Topologically, residues Gly-266–Asp-281 are cytoplasmic. The helical transmembrane segment at Val-282–Trp-302 threads the bilayer. The Extracellular segment spans residues Lys-303 to Gln-356. Ser-318 carries the post-translational modification Phosphoserine. Residues Leu-357–Gly-377 form a helical membrane-spanning segment. Residues Cys-378–Lys-400 lie on the Cytoplasmic side of the membrane. A helical transmembrane segment spans residues Val-401–Leu-421. The Extracellular segment spans residues Asn-422–Leu-437. The helical transmembrane segment at Ile-438 to Phe-458 threads the bilayer. Topologically, residues Tyr-459–Glu-750 are cytoplasmic. The tract at residues Arg-524–Glu-650 is disordered. Over residues Glu-532–Gly-551 the composition is skewed to gly residues. Acidic residues predominate over residues Glu-582 to Gly-606. Position 669 is a phosphoserine (Ser-669). The segment at Arg-681 to Gln-728 is disordered. A helical transmembrane segment spans residues Met-751 to Cys-771. At Ala-772–Lys-807 the chain is on the extracellular side. Ser-801 is subject to Phosphoserine; by FAM20C. Residues Val-808–Gly-828 traverse the membrane as a helical segment. Residues Gln-829–Ala-841 are Cytoplasmic-facing. A helical membrane pass occupies residues Ala-842 to Val-862. At Ala-863 to His-1232 the chain is on the extracellular side. 3 disordered regions span residues Arg-888 to Leu-970, Leu-997 to Asp-1152, and Pro-1174 to His-1232. Positions Arg-904 to Ala-932 are enriched in basic and acidic residues. Low complexity-rich tracts occupy residues Glu-933–Ser-953 and Leu-997–Thr-1006. Residue Arg-1020 is modified to Asymmetric dimethylarginine; alternate. An Omega-N-methylarginine; alternate modification is found at Arg-1020. Residues Lys-1031–His-1043 are compositionally biased toward basic and acidic residues. A compositionally biased stretch (polar residues) spans Thr-1078–Gln-1087. 2 stretches are compositionally biased toward pro residues: residues Pro-1130–Pro-1145 and Leu-1197–Ser-1221.

The protein belongs to the anoctamin family. In terms of tissue distribution, expressed in embryonic stem cells, fetal brain and neural tissues.

It localises to the cell membrane. Does not exhibit calcium-activated chloride channel (CaCC) activity. In Homo sapiens (Human), this protein is Anoctamin-8 (ANO8).